A 274-amino-acid polypeptide reads, in one-letter code: Diaminopimelate epimerase (274 aa).

3 residues coordinate substrate: N11, Q44, and N64. Catalysis depends on C73, which acts as the Proton donor. Substrate contacts are provided by residues 74–75 (GN), N157, N190, and 208–209 (ER). C217 functions as the Proton acceptor in the catalytic mechanism. 218-219 (GS) provides a ligand contact to substrate.

The protein belongs to the diaminopimelate epimerase family. In terms of assembly, homodimer.

It localises to the cytoplasm. It catalyses the reaction (2S,6S)-2,6-diaminopimelate = meso-2,6-diaminopimelate. It functions in the pathway amino-acid biosynthesis; L-lysine biosynthesis via DAP pathway; DL-2,6-diaminopimelate from LL-2,6-diaminopimelate: step 1/1. Functionally, catalyzes the stereoinversion of LL-2,6-diaminopimelate (L,L-DAP) to meso-diaminopimelate (meso-DAP), a precursor of L-lysine and an essential component of the bacterial peptidoglycan. The protein is Diaminopimelate epimerase of Sodalis glossinidius (strain morsitans).